A 173-amino-acid polypeptide reads, in one-letter code: C-type lectin mosGCTL-7 (173 aa).

The first 24 residues, 1 to 24 (MVVGWSLLGWALSWLAVATVVVSA), serve as a signal peptide directing secretion. The 117-residue stretch at 51-167 (NWFKATEYCH…CWDEYYFVCE (117 aa)) folds into the C-type lectin domain. Disulfide bonds link C59-C166 and C139-C158. N-linked (GlcNAc...) asparagine glycosylation is found at N119 and N144.

In terms of assembly, interacts with putative receptor-type tyrosine-protein phosphatase mosPTP-1; the interaction may mediate the recruitment of Japanese encephalitis virus particles in complex with C-type lectin mosGCTL-7 to the cell surface.

It is found in the secreted. In terms of biological role, carbohydrate-binding protein. Its function is as follows. (Microbial infection) Facilitates Japanese encephalitis virus infection in mosquitoes. In Culex quinquefasciatus (Southern house mosquito), this protein is C-type lectin mosGCTL-7.